The following is a 185-amino-acid chain: Ribosome-recycling factor (185 aa).

Belongs to the RRF family.

Its subcellular location is the cytoplasm. Responsible for the release of ribosomes from messenger RNA at the termination of protein biosynthesis. May increase the efficiency of translation by recycling ribosomes from one round of translation to another. This Wigglesworthia glossinidia brevipalpis protein is Ribosome-recycling factor.